We begin with the raw amino-acid sequence, 859 residues long: Protein argonaute-2 (859 aa).

Residues 1 to 27 form a disordered region; sequence MYSGAGPALAPPAPPPPIQGYAFKPPP. Tyrosine 2 carries the 3'-nitrotyrosine modification. A compositionally biased stretch (pro residues) spans 9–27; sequence LAPPAPPPPIQGYAFKPPP. One can recognise a PAZ domain in the interval 229-348; that stretch reads PVIEFVCEVL…LPLEVCNIVA (120 aa). An interaction with guide RNA region spans residues 311 to 316; sequence YFKDRH. The residue at position 387 (serine 387) is a Phosphoserine. Residues 517–818 form the Piwi domain; that stretch reads LVVVILPGKT…VAFRARYHLV (302 aa). Residues 524-566 form an interaction with guide RNA region; sequence GKTPVYAEVKRVGDTVLGMATQCVQMKNVQRTTPQTLSNLCLK. An interaction with GW182 family members region spans residues 587 to 590; it reads FQQP. Aspartate 597 is an a divalent metal cation binding site. The tract at residues 650–660 is interaction with GW182 family members; sequence LIQFYKSTRFK. Aspartate 669 is a binding site for a divalent metal cation. Proline 700 bears the 4-hydroxyproline mark. Interaction with guide RNA stretches follow at residues 709 to 710, 753 to 761, and 790 to 812; these read KR, HAGIQGTSR, and YVRC…VAFR. Histidine 807 is an a divalent metal cation binding site. Phosphoserine is present on residues serine 824, serine 828, serine 831, and serine 834.

This sequence belongs to the argonaute family. Ago subfamily. In terms of assembly, interacts with DICER1 through its Piwi domain and with TARBP2 during assembly of the RNA-induced silencing complex (RISC). Together, DICER1, AGO2 and TARBP2 constitute the trimeric RISC loading complex (RLC), or micro-RNA (miRNA) loading complex (miRLC). Within the RLC/miRLC, DICER1 and TARBP2 are required to process precursor miRNAs (pre-miRNAs) to mature miRNAs and then load them onto AGO2. AGO2 bound to the mature miRNA constitutes the minimal RISC and may subsequently dissociate from DICER1 and TARBP2. Note however that the term RISC has also been used to describe the trimeric RLC/miRLC. The formation of RISC complexes containing siRNAs rather than miRNAs appears to occur independently of DICER1. Interacts with AGO1. Also interacts with DDB1, DDX5, DDX6, DDX20, DHX30, DHX36, DDX47, DHX9, ELAVL, FXR1, GEMIN4, HNRNPF, IGF2BP1, ILF3, IMP8, MATR3, PABPC1, PRMT5, P4HA1, P4HB, RBM4, SART3, TNRC6A, TNRC6B, UPF1 and YBX1. Interacts with the P-body components DCP1A and XRN1. Associates with polysomes and messenger ribonucleoproteins (mNRPs). Interacts with RBM4; the interaction is modulated under stress-induced conditions, occurs under both cell proliferation and differentiation conditions and in an RNA- and phosphorylation-independent manner. Interacts with LIMD1, WTIP and AJUBA. Interacts with TRIM71; the interaction increases in presence of RNA. Interacts with APOBEC3G in an RNA-dependent manner. Interacts with APOBEC3A, APOBEC3C, APOBEC3F and APOBEC3H. Interacts with DICER1, TARBP2, EIF6, MOV10 and RPL7A (60S ribosome subunit); they form a large RNA-induced silencing complex (RISC). Interacts with FMR1. Interacts with ZFP36. Found in a complex, composed of AGO2, CHD7 and ARB2A. Interacts with RC3H1; the interaction is RNA independent. Interacts with SND1. Interacts with SYT11. Interacts with CLNK. Interacts with GARRE1. Interacts with GRB2; this interaction is important for the formation of a ternary complex containing GRB2, AGO2 and DICER1. (Microbial infection) Interacts with Epstein-Barr virus (EBV) tegument protein BGLF2; this interaction participates in the regulation of cellular miRNA by the virus, leading to enhanced SUMOylation. As to quaternary structure, (Microbial infection) Interacts with rotavirus A non-structural protein 5; this interaction probably plays a role in the sequestration of AGO2 in viral factories. In terms of assembly, (Microbial infection) Interacts with human herpesvirus 8 protein MTA/ORF57; this interaction inhibits P-body formation. Mg(2+) is required as a cofactor. The cofactor is Mn(2+). Post-translationally, hydroxylated. 4-hydroxylation appears to enhance protein stability but is not required for miRNA-binding or endonuclease activity. In terms of processing, ubiquitinated on surface-exposed lysines by a SCF-like E3 ubiquitin-protein ligase complex containing ZSWIM8 during target-directed microRNA degradation (TDMD), a process that mediates degradation of microRNAs (miRNAs). Ubiquitination by the SCF-like E3 ubiquitin-protein ligase complex containing ZSWIM8 leads to its subsequent degradation, thereby exposing miRNAs for degradation. ZSWIM8 recognizes and binds AGO2 when it is engaged with a TDMD target. Phosphorylated. A phosphorylation cycle of C-terminal serine cluster (Ser-824-Ser-834) regulates the release of target mRNAs. Target-binding leads to phosphorylation of these residues by CSNK1A1, which reduces the affinity of AGO2 for mRNA and enables target release. The ANKRD52-PPP6C phosphatase complex dephosphorylates the residues, which primes AGO2 for binding a new target. Post-translationally, phosphorylation at Ser-387 by AKT3; leads to up-regulate translational repression of microRNA target and down-regulate endonucleolytic cleavage.

It is found in the cytoplasm. The protein localises to the P-body. Its subcellular location is the nucleus. It carries out the reaction Endonucleolytic cleavage to 5'-phosphomonoester.. With respect to regulation, inhibited by EDTA. Required for RNA-mediated gene silencing (RNAi) by the RNA-induced silencing complex (RISC). The 'minimal RISC' appears to include AGO2 bound to a short guide RNA such as a microRNA (miRNA) or short interfering RNA (siRNA). These guide RNAs direct RISC to complementary mRNAs that are targets for RISC-mediated gene silencing. The precise mechanism of gene silencing depends on the degree of complementarity between the miRNA or siRNA and its target. Binding of RISC to a perfectly complementary mRNA generally results in silencing due to endonucleolytic cleavage of the mRNA specifically by AGO2. Binding of RISC to a partially complementary mRNA results in silencing through inhibition of translation, and this is independent of endonuclease activity. May inhibit translation initiation by binding to the 7-methylguanosine cap, thereby preventing the recruitment of the translation initiation factor eIF4-E. May also inhibit translation initiation via interaction with EIF6, which itself binds to the 60S ribosomal subunit and prevents its association with the 40S ribosomal subunit. The inhibition of translational initiation leads to the accumulation of the affected mRNA in cytoplasmic processing bodies (P-bodies), where mRNA degradation may subsequently occur. In some cases RISC-mediated translational repression is also observed for miRNAs that perfectly match the 3' untranslated region (3'-UTR). Can also up-regulate the translation of specific mRNAs under certain growth conditions. Binds to the AU element of the 3'-UTR of the TNF (TNF-alpha) mRNA and up-regulates translation under conditions of serum starvation. Also required for transcriptional gene silencing (TGS), in which short RNAs known as antigene RNAs or agRNAs direct the transcriptional repression of complementary promoter regions. Its function is as follows. (Microbial infection) Upon Sars-CoV-2 infection, associates with viral miRNA-like small RNA, CoV2-miR-O7a, and may repress mRNAs, such as BATF2, to evade the IFN response. The protein is Protein argonaute-2 of Homo sapiens (Human).